The sequence spans 585 residues: Switch-associated protein 70 (585 aa).

The PH domain maps to 210 to 306 (DVLKQGYMMK…WIQAIYSTIH (97 aa)). The stretch at 316-529 (HKEARQRRKE…VKKKLEMATH (214 aa)) forms a coiled coil. Positions 347 to 373 (ANENKQQELESVRKKLEEAASRAADEE) are disordered. The span at 351 to 373 (KQQELESVRKKLEEAASRAADEE) shows a compositional bias: basic and acidic residues.

The SWAP complex consists of NPM1, NCL, PARP1 and SWAP70. Post-translationally, tyrosine-phosphorylated. In terms of tissue distribution, spleen. Expressed only in B-cells that have been induced to switch to various Ig isotypes.

It is found in the cytoplasm. Its subcellular location is the cell membrane. The protein localises to the nucleus. It localises to the cell projection. The protein resides in the lamellipodium. It is found in the cytoskeleton. Its function is as follows. Phosphatidylinositol 3,4,5-trisphosphate-dependent guanine nucleotide exchange factor (GEF) which, independently of RAS, transduces signals from tyrosine kinase receptors to RAC. It also mediates signaling of membrane ruffling. Regulates the actin cytoskeleton as an effector or adapter protein in response to agonist stimulated phosphatidylinositol (3,4)-bisphosphate production and cell protrusion. This is Switch-associated protein 70 (Swap70) from Mus musculus (Mouse).